Consider the following 763-residue polypeptide: Ethylene receptor 2 (763 aa).

Helical transmembrane passes span 58–78 (FLIA…ATCS), 86–106 (IVLQ…ITMF), and 115–135 (VVLA…ATAI). Residues Cys97 and His101 each contribute to the Cu cation site. The GAF domain maps to 190 to 339 (DRHTILYTTM…VVADQVAVAL (150 aa)). Residues 382-615 (AMYDGMRRPM…TIMLALQFQL (234 aa)) enclose the Histidine kinase domain. In terms of domain architecture, Response regulatory spans 641-760 (QVILVDSDDT…ALGDELYRVL (120 aa)). Asp692 carries the 4-aspartylphosphate modification.

Belongs to the ethylene receptor family. The cofactor is Cu cation. In terms of tissue distribution, expressed in anthers and hulls.

It localises to the endoplasmic reticulum membrane. It carries out the reaction ATP + protein L-histidine = ADP + protein N-phospho-L-histidine.. Its function is as follows. Ethylene receptor related to bacterial two-component regulators. Acts as a negative regulator of ethylene signaling. May delay the transition from the vegetative stage to the floral stage by up-regulating GI (GIGANTEA) and RCN1 and cause starch accumulation in stems by down-regulating the alpha-amylase AMY3D. The sequence is that of Ethylene receptor 2 from Oryza sativa subsp. indica (Rice).